Here is a 596-residue protein sequence, read N- to C-terminus: Myosin light chain kinase 2, skeletal/cardiac muscle (596 aa).

The disordered stretch occupies residues methionine 1–threonine 224. N-acetylalanine is present on alanine 2. A compositionally biased stretch (basic and acidic residues) spans aspartate 40–aspartate 63. The span at glutamate 88–proline 104 shows a compositional bias: low complexity. Serine 143, serine 149, and serine 151 each carry phosphoserine. Residues arginine 189–glutamate 209 are compositionally biased toward basic and acidic residues. The Protein kinase domain occupies methionine 285 to leucine 540. ATP-binding positions include leucine 291–valine 299 and lysine 314. Aspartate 406 functions as the Proton acceptor in the catalytic mechanism. Threonine 445 bears the Phosphothreonine mark. The segment at isoleucine 574–serine 586 is calmodulin-binding.

It belongs to the protein kinase superfamily. CAMK Ser/Thr protein kinase family. In terms of assembly, may interact with centrin. As to expression, heart and skeletal muscles. Increased expression in the apical tissue compared to the interventricular septal tissue.

The protein resides in the cytoplasm. The enzyme catalyses L-seryl-[myosin light chain] + ATP = O-phospho-L-seryl-[myosin light chain] + ADP + H(+). The catalysed reaction is L-threonyl-[myosin light chain] + ATP = O-phospho-L-threonyl-[myosin light chain] + ADP + H(+). Functionally, implicated in the level of global muscle contraction and cardiac function. Phosphorylates a specific serine in the N-terminus of a myosin light chain. The sequence is that of Myosin light chain kinase 2, skeletal/cardiac muscle (MYLK2) from Homo sapiens (Human).